Consider the following 201-residue polypeptide: 3-isopropylmalate dehydratase small subunit (201 aa).

It belongs to the LeuD family. LeuD type 1 subfamily. In terms of assembly, heterodimer of LeuC and LeuD.

The catalysed reaction is (2R,3S)-3-isopropylmalate = (2S)-2-isopropylmalate. It functions in the pathway amino-acid biosynthesis; L-leucine biosynthesis; L-leucine from 3-methyl-2-oxobutanoate: step 2/4. Functionally, catalyzes the isomerization between 2-isopropylmalate and 3-isopropylmalate, via the formation of 2-isopropylmaleate. The polypeptide is 3-isopropylmalate dehydratase small subunit (Sinorhizobium medicae (strain WSM419) (Ensifer medicae)).